The sequence spans 1109 residues: Zinc finger E-box-binding homeobox 1 (1109 aa).

Disordered regions lie at residues 1–106 (MADG…DPNV) and 123–143 (PEED…NGTP). Residues 15 to 30 (PRRNNVTNYNTVVEAN) are compositionally biased toward low complexity. Phosphoserine occurs at positions 31 and 33. Over residues 87–98 (VKDDECDSDAEN) the composition is skewed to acidic residues. The C2H2-type 1 zinc-finger motif lies at 150-173 (LTCPYCDRGYKRFTSLKEHIKYRH). Residues Lys166 and Lys175 each participate in a glycyl lysine isopeptide (Lys-Gly) (interchain with G-Cter in SUMO2) cross-link. 2 consecutive C2H2-type zinc fingers follow at residues 180–202 (FSCS…MTSH) and 220–242 (FKCT…LRIH). The C2H2-type 4; atypical zinc-finger motif lies at 248 to 272 (YECPNCKKRFSHSGSYSSHISSKKC). A disordered region spans residues 278–307 (VNGRPRSGLKTSQCSSPSLSTSPGSPTRPQ). A Glycyl lysine isopeptide (Lys-Gly) (interchain with G-Cter in SUMO2) cross-link involves residue Lys287. The segment covering 288–304 (TSQCSSPSLSTSPGSPT) has biased composition (low complexity). Phosphoserine occurs at positions 293 and 302. Glycyl lysine isopeptide (Lys-Gly) (interchain with G-Cter in SUMO2) cross-links involve residues Lys311 and Lys315. Residue Lys327 forms a Glycyl lysine isopeptide (Lys-Gly) (interchain with G-Cter in SUMO); alternate linkage. Lys327 is covalently cross-linked (Glycyl lysine isopeptide (Lys-Gly) (interchain with G-Cter in SUMO2); alternate). Glycyl lysine isopeptide (Lys-Gly) (interchain with G-Cter in SUMO2) cross-links involve residues Lys419, Lys473, Lys484, Lys495, and Lys528. 3 disordered regions span residues 468 to 501 (VPQN…KDKS), 525 to 566 (PELK…SQPP), and 614 to 711 (QIPG…PQVE). Basic and acidic residues predominate over residues 483–501 (CKSEKSPEDLTVKSEKDKS). The segment at residues 559 to 618 (DLSPSQPPLKNLLSLLKAYYALNAQPSTEELTKIADSVNLPLDVVKKWFEKMQAGQIPGQ) is a DNA-binding region (homeobox; atypical). Residues 654–665 (RGQSPLKMTSSP) show a composition bias toward polar residues. Phosphoserine occurs at positions 657, 664, 671, and 678. Over residues 673 to 703 (INGSRSCTSSPSPLNLSSARNPQGYSCVSEG) the composition is skewed to polar residues. Position 680 is a phosphothreonine (Thr680). Ser682 is modified (phosphoserine). A Glycyl lysine isopeptide (Lys-Gly) (interchain with G-Cter in SUMO); alternate cross-link involves residue Lys752. Lys752 is covalently cross-linked (Glycyl lysine isopeptide (Lys-Gly) (interchain with G-Cter in SUMO2); alternate). The disordered stretch occupies residues 834 to 873 (PPVKVIQPNGNQDERQDTSSEGVSVEDQNDSDCTPPKKKT). 2 C2H2-type zinc fingers span residues 881–903 (YACD…KYEH) and 909–931 (HECG…MRLH). A C2H2-type 7; atypical zinc finger spans residues 937 to 958 (YQCDKCGKRFSHSGSYSQHMNH). Residues 968–1109 (EDRDAMEQED…RLSEEKTNEA (142 aa)) are disordered. Acidic residues predominate over residues 1012–1066 (EEDEDSEKEEEEEDKEMEELQEDKECENPQEEEEEEEEEEEEEEEEEEEEAEEAE). The segment covering 1071–1087 (AAKTGGAVEEEAAQQAG) has biased composition (low complexity). Basic and acidic residues predominate over residues 1097–1109 (ESKRLSEEKTNEA).

It belongs to the delta-EF1/ZFH-1 C2H2-type zinc-finger family. In terms of assembly, interacts (via N-terminus) with SMARCA4/BRG1. Ubiquitinated, leading to degradation in a proteasome-dependent manner. Deubiquitinated by USP51, leading to stabilization.

Its subcellular location is the nucleus. Acts as a transcriptional repressor. Binds to E-box sequences in the immunoglobulin heavy chain enhancer as well as in the regulatory regions of many other tissue-specific genes. Represses E-cadherin promoter and induces an epithelial-mesenchymal transition (EMT) by recruiting SMARCA4/BRG1. Represses BCL6 transcription in the presence of the corepressor CTBP1. Positively regulates neuronal differentiation. Represses RCOR1 transcription activation during neurogenesis. Represses transcription by binding to the E box (5'-CANNTG-3'). In the absence of TGFB1, acts as a repressor of COL1A2 transcription via binding to the E-box in the upstream enhancer region. The chain is Zinc finger E-box-binding homeobox 1 from Rattus norvegicus (Rat).